Reading from the N-terminus, the 271-residue chain is GPN-loop GTPase 3 (271 aa).

Residue 13-18 (GAGKST) participates in GTP binding. The Gly-Pro-Asn (GPN)-loop; involved in dimer interface signature appears at 70-72 (GPN). 173 to 176 (SKLD) contributes to the GTP binding site.

This sequence belongs to the GPN-loop GTPase family. In terms of assembly, heterodimers with GPN1 or GPN2. Binds to RNA polymerase II (RNAPII).

Functionally, small GTPase required for proper nuclear import of RNA polymerase II and III (RNAPII and RNAPIII). May act at an RNAP assembly step prior to nuclear import. In Kluyveromyces lactis (strain ATCC 8585 / CBS 2359 / DSM 70799 / NBRC 1267 / NRRL Y-1140 / WM37) (Yeast), this protein is GPN-loop GTPase 3.